The primary structure comprises 433 residues: Trigger factor (433 aa).

One can recognise a PPIase FKBP-type domain in the interval 163-248 (GDTVNIDFSG…VNEIKFKEVP (86 aa)).

Belongs to the FKBP-type PPIase family. Tig subfamily.

Its subcellular location is the cytoplasm. The catalysed reaction is [protein]-peptidylproline (omega=180) = [protein]-peptidylproline (omega=0). Functionally, involved in protein export. Acts as a chaperone by maintaining the newly synthesized protein in an open conformation. Functions as a peptidyl-prolyl cis-trans isomerase. This chain is Trigger factor, found in Staphylococcus aureus (strain Newman).